Consider the following 442-residue polypeptide: 3-phosphoshikimate 1-carboxyvinyltransferase (442 aa).

Residues K25, S26, and R30 each coordinate 3-phosphoshikimate. Phosphoenolpyruvate is bound at residue K25. Residues G97 and R125 each coordinate phosphoenolpyruvate. 5 residues coordinate 3-phosphoshikimate: S170, S171, Q172, D323, and K350. Q172 is a binding site for phosphoenolpyruvate. Catalysis depends on D323, which acts as the Proton acceptor. Phosphoenolpyruvate is bound by residues R354 and R399.

It belongs to the EPSP synthase family. Monomer.

It is found in the cytoplasm. The catalysed reaction is 3-phosphoshikimate + phosphoenolpyruvate = 5-O-(1-carboxyvinyl)-3-phosphoshikimate + phosphate. It participates in metabolic intermediate biosynthesis; chorismate biosynthesis; chorismate from D-erythrose 4-phosphate and phosphoenolpyruvate: step 6/7. Its function is as follows. Catalyzes the transfer of the enolpyruvyl moiety of phosphoenolpyruvate (PEP) to the 5-hydroxyl of shikimate-3-phosphate (S3P) to produce enolpyruvyl shikimate-3-phosphate and inorganic phosphate. This chain is 3-phosphoshikimate 1-carboxyvinyltransferase, found in Bartonella tribocorum (strain CIP 105476 / IBS 506).